The primary structure comprises 465 residues: MSERREEERGRTGFSMKKNHNSNFNRRNQEQIHQKLPTKISGPLTLEQLCAYQHMFRIQEISSIIKSHSFEVPNARNRSPSPPPVYDAEGKRINTREQLYKKKLMNERFKLVEVVSKLIPGYSAPKDYKRPTTFQEKYYIPVSQYPQINFVGLLLGPRGKTLRKMQEDSGCKIAIRGRGSVKEGKTSSDLPPGAMDFSDPLHCLIIADNEEKIENGIKACRNIVIKAVTSPEGQNELKRGQLRELAELNGTLREDNRPCATCGQQGHKKYECPHRETFAMKIICRRCNQPGHTIRDCTSDSNYGKQIHSSRYNNEMPYHRTSTAVDQPSAYSRYGYTPRNHNGSSRFNDNSKYLNNGNKRATPQPELELETSHKRQQINPTSSSQDTLSHQTNHMTMTTIEDSGIDKLQLPAGMSNENPIPQPVNFNEIQINDVSGPNGTLEAPPGLDLGNNDSNITLQGPPGLN.

A compositionally biased stretch (basic and acidic residues) spans 1–11 (MSERREEERGR). The tract at residues 1 to 22 (MSERREEERGRTGFSMKKNHNS) is disordered. Residues 139 to 205 (YIPVSQYPQI…DFSDPLHCLI (67 aa)) enclose the KH domain. CCHC-type zinc fingers lie at residues 257–274 (RPCA…ECPH) and 282–299 (IICR…DCTS). Disordered regions lie at residues 324-391 (AVDQ…LSHQ) and 431-465 (INDV…PGLN). Composition is skewed to polar residues over residues 339–361 (RNHN…NKRA) and 377–391 (QINP…LSHQ).

This sequence belongs to the BBP/SF1 family.

The protein resides in the nucleus. Necessary for the splicing of pre-mRNA. Has a role in the recognition of the branch site (5'-UACUAAC-3'), the pyrimidine tract and the 3'-splice site at the 3'-end of introns. The chain is Branchpoint-bridging protein (BBP) from Candida glabrata (strain ATCC 2001 / BCRC 20586 / JCM 3761 / NBRC 0622 / NRRL Y-65 / CBS 138) (Yeast).